Here is a 313-residue protein sequence, read N- to C-terminus: Malate dehydrogenase (313 aa).

NAD(+) contacts are provided by residues 11 to 16 (GAGSIG) and Asp35. Substrate is bound by residues Arg84 and Arg90. Residues Asn97 and 120 to 122 (VTN) contribute to the NAD(+) site. Residues Asn122 and Arg153 each contribute to the substrate site. The active-site Proton acceptor is the His177.

This sequence belongs to the LDH/MDH superfamily. MDH type 3 family.

It carries out the reaction (S)-malate + NAD(+) = oxaloacetate + NADH + H(+). Catalyzes the reversible oxidation of malate to oxaloacetate. This Ehrlichia chaffeensis (strain ATCC CRL-10679 / Arkansas) protein is Malate dehydrogenase.